The chain runs to 647 residues: 1-deoxy-D-xylulose-5-phosphate synthase (647 aa).

Residues H88 and 129 to 131 (GHA) each bind thiamine diphosphate. Position 160 (D160) interacts with Mg(2+). Residues 161–162 (GA), N189, Y300, and E377 contribute to the thiamine diphosphate site. N189 is a Mg(2+) binding site.

This sequence belongs to the transketolase family. DXPS subfamily. As to quaternary structure, homodimer. Mg(2+) is required as a cofactor. The cofactor is thiamine diphosphate.

It catalyses the reaction D-glyceraldehyde 3-phosphate + pyruvate + H(+) = 1-deoxy-D-xylulose 5-phosphate + CO2. It functions in the pathway metabolic intermediate biosynthesis; 1-deoxy-D-xylulose 5-phosphate biosynthesis; 1-deoxy-D-xylulose 5-phosphate from D-glyceraldehyde 3-phosphate and pyruvate: step 1/1. In terms of biological role, catalyzes the acyloin condensation reaction between C atoms 2 and 3 of pyruvate and glyceraldehyde 3-phosphate to yield 1-deoxy-D-xylulose-5-phosphate (DXP). The chain is 1-deoxy-D-xylulose-5-phosphate synthase from Dehalococcoides mccartyi (strain CBDB1).